The primary structure comprises 203 residues: ATP-dependent Clp protease proteolytic subunit 1 (203 aa).

S101 functions as the Nucleophile in the catalytic mechanism. The active site involves H126.

Belongs to the peptidase S14 family. In terms of assembly, fourteen ClpP subunits assemble into 2 heptameric rings which stack back to back to give a disk-like structure with a central cavity, resembling the structure of eukaryotic proteasomes.

Its subcellular location is the cytoplasm. It carries out the reaction Hydrolysis of proteins to small peptides in the presence of ATP and magnesium. alpha-casein is the usual test substrate. In the absence of ATP, only oligopeptides shorter than five residues are hydrolyzed (such as succinyl-Leu-Tyr-|-NHMec, and Leu-Tyr-Leu-|-Tyr-Trp, in which cleavage of the -Tyr-|-Leu- and -Tyr-|-Trp bonds also occurs).. Cleaves peptides in various proteins in a process that requires ATP hydrolysis. Has a chymotrypsin-like activity. Plays a major role in the degradation of misfolded proteins. The sequence is that of ATP-dependent Clp protease proteolytic subunit 1 from Synechococcus sp. (strain JA-3-3Ab) (Cyanobacteria bacterium Yellowstone A-Prime).